The following is a 430-amino-acid chain: Glutamate-1-semialdehyde 2,1-aminomutase (430 aa).

At lysine 265 the chain carries N6-(pyridoxal phosphate)lysine.

This sequence belongs to the class-III pyridoxal-phosphate-dependent aminotransferase family. HemL subfamily. In terms of assembly, homodimer. Pyridoxal 5'-phosphate serves as cofactor.

It localises to the cytoplasm. The catalysed reaction is (S)-4-amino-5-oxopentanoate = 5-aminolevulinate. Its pathway is porphyrin-containing compound metabolism; protoporphyrin-IX biosynthesis; 5-aminolevulinate from L-glutamyl-tRNA(Glu): step 2/2. The chain is Glutamate-1-semialdehyde 2,1-aminomutase from Shewanella putrefaciens (strain CN-32 / ATCC BAA-453).